We begin with the raw amino-acid sequence, 244 residues long: Derlin-2.1 (244 aa).

Residues 1–21 lie on the Cytoplasmic side of the membrane; sequence MAQAVEEWYKQMPIITRSYLT. A helical transmembrane segment spans residues 22–42; sequence AAVVTTVGCSLEIISPYNLYL. At 43-96 the chain is on the lumenal side; sequence NPTLVVKQYQFWRLVTNFLYFRKMDLDFLFHMFFLARYCKLLEENSFRGKTADF. Residues 97-117 form a helical membrane-spanning segment; it reads LYMLLFGATVLTGIVLIGGMI. The Cytoplasmic portion of the chain corresponds to 118–121; the sequence is PYLS. A helical membrane pass occupies residues 122–142; that stretch reads VSFSKIIFLSNSLTFMMVYVW. Topologically, residues 143–152 are lumenal; that stretch reads SKQNPYIHMS. Residues 153–173 traverse the membrane as a helical segment; sequence FLGLFTFTAAYLPWVLLGFSI. Residues 174-244 lie on the Cytoplasmic side of the membrane; sequence LVGASAWGDF…HAPFDEIHQD (71 aa).

This sequence belongs to the derlin family.

It is found in the endoplasmic reticulum membrane. In terms of biological role, may be involved in the degradation process of specific misfolded endoplasmic reticulum (ER) luminal proteins. This chain is Derlin-2.1 (DER2.1), found in Arabidopsis thaliana (Mouse-ear cress).